The primary structure comprises 113 residues: Immunoglobulin lambda variable 2-23 (113 aa).

Positions 1–19 are cleaved as a signal peptide; sequence MAWALLLLTLLTQDTGSWA. Gln-20 is modified (pyrrolidone carboxylic acid). A framework-1 region spans residues 20–44; sequence QSALTQPASVSGSPGQSITISCTGT. An Ig-like domain is found at 20–113; sequence QSALTQPASV…EADYYCCSYA (94 aa). Cys-41 and Cys-109 are oxidised to a cystine. A complementarity-determining-1 region spans residues 45–53; sequence SSDVGSYNL. Residues 54 to 70 are framework-2; sequence VSWYQQHPGKAPKLMIY. The interval 71–73 is complementarity-determining-2; sequence EGS. The segment at 73-92 is disordered; it reads SKRPSGVSNRFSGSKSGNTA. The interval 74 to 109 is framework-3; that stretch reads KRPSGVSNRFSGSKSGNTASLTISGLQAEDEADYYC. The span at 78 to 92 shows a compositional bias: polar residues; sequence GVSNRFSGSKSGNTA. The interval 110 to 113 is complementarity-determining-3; it reads CSYA.

As to quaternary structure, immunoglobulins are composed of two identical heavy chains and two identical light chains; disulfide-linked.

It localises to the secreted. It is found in the cell membrane. V region of the variable domain of immunoglobulin light chains that participates in the antigen recognition. Immunoglobulins, also known as antibodies, are membrane-bound or secreted glycoproteins produced by B lymphocytes. In the recognition phase of humoral immunity, the membrane-bound immunoglobulins serve as receptors which, upon binding of a specific antigen, trigger the clonal expansion and differentiation of B lymphocytes into immunoglobulins-secreting plasma cells. Secreted immunoglobulins mediate the effector phase of humoral immunity, which results in the elimination of bound antigens. The antigen binding site is formed by the variable domain of one heavy chain, together with that of its associated light chain. Thus, each immunoglobulin has two antigen binding sites with remarkable affinity for a particular antigen. The variable domains are assembled by a process called V-(D)-J rearrangement and can then be subjected to somatic hypermutations which, after exposure to antigen and selection, allow affinity maturation for a particular antigen. This chain is Immunoglobulin lambda variable 2-23, found in Homo sapiens (Human).